The sequence spans 697 residues: T-related protein (697 aa).

The interval 1-60 is disordered; the sequence is MTTSHILSAVDPTTGLSGNVSGGGGGGGAGGGAGSGSPQHVTHNGHGHGHGLGGVAAVSG. 2 stretches are compositionally biased toward gly residues: residues 20 to 35 and 50 to 60; these read VSGGGGGGGAGGGAGS and HGLGGVAAVSG. The T-box DNA-binding region spans 96-264; that stretch reads LWLRFQNLTN…YNPFAKAFLD (169 aa). Residues 316-330 are compositionally biased toward low complexity; sequence SVSSAESVGPSSGGS. Disordered regions lie at residues 316 to 407 and 462 to 488; these read SVSS…GGIG and VCSGRNISSHNSPSPTNGSPSYTTSSP. Residues 337 to 351 show a composition bias toward polar residues; that stretch reads SLSSRSVAPTRTTPY. Low complexity-rich tracts occupy residues 352–373, 381–401, and 469–488; these read SRPRVVSGSGSNGSAGNASSTS, QTPTSLHSTSTGSVSTSVSSS, and SSHNSPSPTNGSPSYTTSSP.

The protein resides in the nucleus. Its function is as follows. Required for the specification of the hindgut and anal pads. The polypeptide is T-related protein (byn) (Drosophila melanogaster (Fruit fly)).